The sequence spans 701 residues: Polyribonucleotide nucleotidyltransferase (701 aa).

Positions 485 and 491 each coordinate Mg(2+). Residues 552–611 (PRITTLKINPEKIRDVIGKGGATIRALTEETGTTIELEDDGTVKIASSNGEATKEAIRRI) enclose the KH domain. Residues 621-689 (GTVYNGKVVR…RQGRVRLSMK (69 aa)) enclose the S1 motif domain.

It belongs to the polyribonucleotide nucleotidyltransferase family. Component of the RNA degradosome, which is a multiprotein complex involved in RNA processing and mRNA degradation. It depends on Mg(2+) as a cofactor.

The protein localises to the cytoplasm. It catalyses the reaction RNA(n+1) + phosphate = RNA(n) + a ribonucleoside 5'-diphosphate. In terms of biological role, involved in mRNA degradation. Catalyzes the phosphorolysis of single-stranded polyribonucleotides processively in the 3'- to 5'-direction. The polypeptide is Polyribonucleotide nucleotidyltransferase (Shewanella piezotolerans (strain WP3 / JCM 13877)).